A 185-amino-acid polypeptide reads, in one-letter code: Elongation factor P (185 aa).

The protein belongs to the elongation factor P family.

Its subcellular location is the cytoplasm. It participates in protein biosynthesis; polypeptide chain elongation. In terms of biological role, involved in peptide bond synthesis. Stimulates efficient translation and peptide-bond synthesis on native or reconstituted 70S ribosomes in vitro. Probably functions indirectly by altering the affinity of the ribosome for aminoacyl-tRNA, thus increasing their reactivity as acceptors for peptidyl transferase. This is Elongation factor P from Nitrosomonas eutropha (strain DSM 101675 / C91 / Nm57).